The primary structure comprises 511 residues: Sodium/proline symporter (511 aa).

13 consecutive transmembrane segments (helical) span residues Trp-16 to Gly-36, Ile-54 to Met-74, Leu-85 to Val-105, Ile-139 to Ser-159, Gly-175 to Val-195, Asp-199 to Leu-219, Val-246 to Ile-266, Leu-284 to Ile-304, Ile-327 to Ser-347, Phe-381 to Trp-401, Ile-407 to Leu-427, Ala-438 to Ile-458, and Phe-467 to Val-487.

The protein belongs to the sodium:solute symporter (SSF) (TC 2.A.21) family.

Its subcellular location is the cell membrane. The catalysed reaction is L-proline(in) + Na(+)(in) = L-proline(out) + Na(+)(out). Functionally, catalyzes the sodium-dependent uptake of extracellular L-proline. The polypeptide is Sodium/proline symporter (putP) (Staphylococcus epidermidis (strain ATCC 12228 / FDA PCI 1200)).